Consider the following 230-residue polypeptide: Lipoprotein-releasing system ATP-binding protein LolD (230 aa).

Residues 10–228 form the ABC transporter domain; that stretch reads LRAEHLSKVY…QLHMANGRLL (219 aa). Position 46–53 (46–53) interacts with ATP; sequence GASGSGKS.

The protein belongs to the ABC transporter superfamily. Lipoprotein translocase (TC 3.A.1.125) family. In terms of assembly, the complex is composed of two ATP-binding proteins (LolD) and two transmembrane proteins (LolC and LolE).

It is found in the cell inner membrane. In terms of biological role, part of the ABC transporter complex LolCDE involved in the translocation of mature outer membrane-directed lipoproteins, from the inner membrane to the periplasmic chaperone, LolA. Responsible for the formation of the LolA-lipoprotein complex in an ATP-dependent manner. This is Lipoprotein-releasing system ATP-binding protein LolD from Bordetella avium (strain 197N).